A 579-amino-acid polypeptide reads, in one-letter code: SLAIN motif-containing protein 1 (579 aa).

Disordered regions lie at residues Met1 to Pro21, Leu60 to Ala95, Gly135 to Leu162, Tyr233 to Asp258, Ser289 to Asp313, and Ile347 to Ile454. The segment covering Ala9–Pro21 has biased composition (low complexity). Residues Pro21 to Ala56 adopt a coiled-coil conformation. Residues Gln63–Ala73 show a composition bias toward pro residues. Residues Glu141–Thr154 are compositionally biased toward low complexity. Residues Tyr233–Gln243 are compositionally biased toward polar residues. Ser241 bears the Phosphoserine mark. 2 stretches are compositionally biased toward low complexity: residues Ser244–Ser253 and Ser289–Ser305. Polar residues predominate over residues Ser362–Phe373. A compositionally biased stretch (low complexity) spans Gln374–Pro390. Polar residues predominate over residues Ala412–Ser432. Asymmetric dimethylarginine is present on Arg469. The tract at residues Ser479–Pro516 is disordered. Residues Pro502–Pro516 show a composition bias toward polar residues. Position 554 is an asymmetric dimethylarginine (Arg554).

Belongs to the SLAIN motif-containing family. In terms of assembly, interacts with MAPRE1, MAPRE2, MAPRE3 and CKAP5. Interacts with ZDHHC17 (via ANK repeats). As to expression, expressed in embryonic stem cells. Expressed in adult bone marrow, brain, kidney, lung, testis and thymus. Expressed in colon. Isoform 1 is highly expressed in brain. Isoform 2 is more widely expressed in bone marrow, brain, colon, kidney, lung and thymus.

It localises to the cytoplasm. The protein resides in the cytoskeleton. Functionally, microtubule plus-end tracking protein that might be involved in the regulation of cytoplasmic microtubule dynamics, microtubule organization and microtubule elongation. In Mus musculus (Mouse), this protein is SLAIN motif-containing protein 1 (Slain1).